Reading from the N-terminus, the 474-residue chain is 3-isopropylmalate dehydratase large subunit (474 aa).

[4Fe-4S] cluster contacts are provided by Cys-353, Cys-414, and Cys-417.

The protein belongs to the aconitase/IPM isomerase family. LeuC type 1 subfamily. In terms of assembly, heterodimer of LeuC and LeuD. Requires [4Fe-4S] cluster as cofactor.

It carries out the reaction (2R,3S)-3-isopropylmalate = (2S)-2-isopropylmalate. Its pathway is amino-acid biosynthesis; L-leucine biosynthesis; L-leucine from 3-methyl-2-oxobutanoate: step 2/4. Its function is as follows. Catalyzes the isomerization between 2-isopropylmalate and 3-isopropylmalate, via the formation of 2-isopropylmaleate. The sequence is that of 3-isopropylmalate dehydratase large subunit from Pseudomonas aeruginosa (strain LESB58).